Reading from the N-terminus, the 161-residue chain is Regulatory protein RecX (161 aa).

This sequence belongs to the RecX family.

It is found in the cytoplasm. In terms of biological role, modulates RecA activity. The sequence is that of Regulatory protein RecX from Thermotoga petrophila (strain ATCC BAA-488 / DSM 13995 / JCM 10881 / RKU-1).